Here is a 421-residue protein sequence, read N- to C-terminus: Peroxisomal succinyl-coenzyme A thioesterase (421 aa).

Ser232 (charge relay system) is an active-site residue. Lys313 carries the post-translational modification N6-succinyllysine. Active-site charge relay system residues include Asp326 and His360. The Microbody targeting signal signature appears at Cys419–Leu421.

This sequence belongs to the C/M/P thioester hydrolase family. In terms of tissue distribution, mainly expressed in liver and kidney. Weakly expressed in other tissues including intestine, adrenal gland and adipose tissues.

It localises to the peroxisome. It carries out the reaction succinyl-CoA + H2O = succinate + CoA + H(+). It catalyses the reaction glutaryl-CoA + H2O = glutarate + CoA + H(+). Its pathway is lipid metabolism; fatty acid metabolism. Its function is as follows. Catalyzes the hydrolysis of acyl-CoAs into free fatty acids and coenzyme A (CoASH), regulating their respective intracellular levels. In contrast to its human ortholog, functions essentially as a succinyl-CoA thioesterase with no activity with medium to long chain saturated acyl-CoAs and with a low activity toward glutaryl-CoA. This chain is Peroxisomal succinyl-coenzyme A thioesterase (Acot4), found in Mus musculus (Mouse).